We begin with the raw amino-acid sequence, 886 residues long: Isoleucine--tRNA ligase (886 aa).

Residues 60–70 carry the 'HIGH' region motif; the sequence is PYANGDIHIGH. L-isoleucyl-5'-AMP is bound at residue Glu-546. A 'KMSKS' region motif is present at residues 587–591; sequence KMSKS. Lys-590 lines the ATP pocket. Residues Cys-856, Cys-859, Cys-870, and Cys-873 each coordinate Zn(2+).

Belongs to the class-I aminoacyl-tRNA synthetase family. IleS type 1 subfamily. Monomer. It depends on Zn(2+) as a cofactor.

Its subcellular location is the cytoplasm. The enzyme catalyses tRNA(Ile) + L-isoleucine + ATP = L-isoleucyl-tRNA(Ile) + AMP + diphosphate. Functionally, catalyzes the attachment of isoleucine to tRNA(Ile). As IleRS can inadvertently accommodate and process structurally similar amino acids such as valine, to avoid such errors it has two additional distinct tRNA(Ile)-dependent editing activities. One activity is designated as 'pretransfer' editing and involves the hydrolysis of activated Val-AMP. The other activity is designated 'posttransfer' editing and involves deacylation of mischarged Val-tRNA(Ile). This Mesomycoplasma hyopneumoniae (strain 232) (Mycoplasma hyopneumoniae) protein is Isoleucine--tRNA ligase.